A 134-amino-acid polypeptide reads, in one-letter code: MSWQTYVDDHLMCDIEGHEDHRLTAAAIVGHDGSVWAQSATFPQFKPEEMNGIMTDFNEPGHLAPTGLHLGGTKYMVIQGEAGAVIRGKKGSGGITIKKTGQALVFGIYEEPVTPGQCNMVVERLGDYLLEQGL.

Cysteine 13 and cysteine 118 are joined by a disulfide. Residues 84 to 100 (AVIRGKKGSGGITIKKT) carry the Involved in PIP2 interaction motif. A Phosphothreonine modification is found at threonine 114.

The protein belongs to the profilin family. Occurs in many kinds of cells as a complex with monomeric actin in a 1:1 ratio. In terms of processing, phosphorylated by MAP kinases.

It localises to the cytoplasm. Its subcellular location is the cytoskeleton. In terms of biological role, binds to actin and affects the structure of the cytoskeleton. At high concentrations, profilin prevents the polymerization of actin, whereas it enhances it at low concentrations. The protein is Profilin-3 of Olea europaea (Common olive).